Consider the following 87-residue polypeptide: Phosphoribosyl-ATP pyrophosphatase (87 aa).

The protein belongs to the PRA-PH family.

Its subcellular location is the cytoplasm. It carries out the reaction 1-(5-phospho-beta-D-ribosyl)-ATP + H2O = 1-(5-phospho-beta-D-ribosyl)-5'-AMP + diphosphate + H(+). It participates in amino-acid biosynthesis; L-histidine biosynthesis; L-histidine from 5-phospho-alpha-D-ribose 1-diphosphate: step 2/9. The chain is Phosphoribosyl-ATP pyrophosphatase from Paenarthrobacter aurescens (strain TC1).